Consider the following 376-residue polypeptide: MAKRDYYEVLGVAKNASDDEIKKAYRKLAMKYHPDRNPDSKDAEEHFKEAKEAYEMLSDGQKRAAYDQYGHAGVDPNVGAAGAQGFGGFADAFGDIFGDIFGQAAGGGRARGGPQVYRGADLRYSMEITLEQAAHGYDTQIRVPSWAACGVCHGSGAKPGTKPETCPTCHGQGTVRMSQGFFSIQQTCPKCHGTGTYIPEPCVHCHGSGKVKETKTLEVKIPAGIDDGMRIRSAGNGEPGINGGPSGDLYVEIHIKPHAVFERDGDDLHCQMPIPFTTAALGGEIEVPTLAGRASFTVPEGTQSGKTFRLRGKGIKGLRSSIAGDLYVHVQVETPVKLTDQQRDLLKQFEKSLAEGGPRHSPQSKSWFDRVKSFFE.

A J domain is found at 5–70; that stretch reads DYYEVLGVAK…QKRAAYDQYG (66 aa). The CR-type zinc finger occupies 136–214; that stretch reads GYDTQIRVPS…CHGSGKVKET (79 aa). Positions 149, 152, 166, 169, 188, 191, 202, and 205 each coordinate Zn(2+). CXXCXGXG motif repeat units follow at residues 149–156, 166–173, 188–195, and 202–209; these read CGVCHGSG, CPTCHGQG, CPKCHGTG, and CVHCHGSG.

This sequence belongs to the DnaJ family. As to quaternary structure, homodimer. It depends on Zn(2+) as a cofactor.

The protein resides in the cytoplasm. Functionally, participates actively in the response to hyperosmotic and heat shock by preventing the aggregation of stress-denatured proteins and by disaggregating proteins, also in an autonomous, DnaK-independent fashion. Unfolded proteins bind initially to DnaJ; upon interaction with the DnaJ-bound protein, DnaK hydrolyzes its bound ATP, resulting in the formation of a stable complex. GrpE releases ADP from DnaK; ATP binding to DnaK triggers the release of the substrate protein, thus completing the reaction cycle. Several rounds of ATP-dependent interactions between DnaJ, DnaK and GrpE are required for fully efficient folding. Also involved, together with DnaK and GrpE, in the DNA replication of plasmids through activation of initiation proteins. The protein is Chaperone protein DnaJ of Burkholderia pseudomallei (strain 1710b).